Here is a 274-residue protein sequence, read N- to C-terminus: Bis(5'-nucleosyl)-tetraphosphatase, symmetrical (274 aa).

This sequence belongs to the Ap4A hydrolase family.

The enzyme catalyses P(1),P(4)-bis(5'-adenosyl) tetraphosphate + H2O = 2 ADP + 2 H(+). Hydrolyzes diadenosine 5',5'''-P1,P4-tetraphosphate to yield ADP. The chain is Bis(5'-nucleosyl)-tetraphosphatase, symmetrical from Shewanella baltica (strain OS155 / ATCC BAA-1091).